Reading from the N-terminus, the 27-residue chain is AnmTX Sco 9a-1 (27 aa).

Hydroxyproline is present on Pro-6. 2 disulfide bridges follow: Cys-7–Cys-18 and Cys-10–Cys-25.

Functionally, has analgesic and anti-inflammatory activity in vivo. At a dose of 0.1 and 1 mg/kg, exhibits anti-inflammatory activity by reducing the volume of edema during 24 h better than the nonsteroidal anti-inflammatory drug, Diclofenac, at dose of 1 mg/kg in a mouse model of acute local lambda-carrageenan-induced inflammation. At a dose of 1 mg/kg, reduces the content of tumor necrosis factor-alpha (TNF-alpha). Demonstrates a significant analgesic effect on acute pain sensitivity in the carrageenan-induced thermal hyperalgesia model at doses of 0.1 and 1 mg/kg. Not toxic in mice, however stimulates exploratory motivation and active search behavior, and demonstrates an anti-anxiety effect. Does not exhibit any effect on currents of rat acid-sensing ion channels ASIC1a or ASIC3. The protein is AnmTX Sco 9a-1 of Stomphia coccinea (Spotted swimming anemone).